A 701-amino-acid chain; its full sequence is Polyribonucleotide nucleotidyltransferase (701 aa).

Mg(2+)-binding residues include D490 and D496. The KH domain occupies 557 to 616 (PKVVTMSINPDKIRDVIGPGGKKINEIIDETGVKLDIEQDGTIFIGAVDQAMINRAKEII). Residues 626–694 (GQVYHAKVKR…KQGRVNASHK (69 aa)) enclose the S1 motif domain.

This sequence belongs to the polyribonucleotide nucleotidyltransferase family. It depends on Mg(2+) as a cofactor.

It localises to the cytoplasm. The catalysed reaction is RNA(n+1) + phosphate = RNA(n) + a ribonucleoside 5'-diphosphate. Involved in mRNA degradation. Catalyzes the phosphorolysis of single-stranded polyribonucleotides processively in the 3'- to 5'-direction. The polypeptide is Polyribonucleotide nucleotidyltransferase (Staphylococcus epidermidis (strain ATCC 12228 / FDA PCI 1200)).